Here is a 176-residue protein sequence, read N- to C-terminus: Small ribosomal subunit protein uS5c (176 aa).

The 64-residue stretch at 26–89 (LVERLIKISR…TDGRKNLIEL (64 aa)) folds into the S5 DRBM domain.

This sequence belongs to the universal ribosomal protein uS5 family. As to quaternary structure, part of the 30S ribosomal subunit. Contacts protein S4.

The protein resides in the plastid. It is found in the chloroplast. Its function is as follows. With S4 and S12 plays an important role in translational accuracy. The sequence is that of Small ribosomal subunit protein uS5c (rps5) from Phaeodactylum tricornutum (strain CCAP 1055/1).